The chain runs to 416 residues: MIDYSQFPRKNILCVDMKSFYASVSAVTMGLNPLTCYLAVVGNTDRQGSVVLAASPALKKDFGIKTGSRLFEIPEDPRIHIVNPQMKLFIRVSTEITKLFYRFVPEKCVHTYSIDESFLDAGKEDPEEMAKAIQSSMWREFGLMCTVGIGDNMLLSKLALDLESKKTKSGIARWRYEDVPNKLWKVRPLSKMWGIGGRMERNLNRMGISTIGQLAKFPLELLEKKFGIMGNQLYYHAHGIDLSEIGAPLMQGQISFGKSQILLRDYTRSEEIKAVLLEICEEVARRARTHNKVGRTISLGIGYSKDELGGGFHRSKTIDLPTSITMDIYRCCLMLFNKFYSGKTVRSVSVTLSNIEDDVNQQLSLFEVDNEKRRKLGFVMDGIRSKYGSKAILRAVSYTPAGTALQRAGLTGGHKS.

Positions 12 to 196 (ILCVDMKSFY…RPLSKMWGIG (185 aa)) constitute a UmuC domain. The Mg(2+) site is built by Asp16 and Asp115. Glu116 is an active-site residue.

Belongs to the DNA polymerase type-Y family. Requires Mg(2+) as cofactor.

The sequence is that of Putative UV-damage repair protein UvrX (uvrX) from Bacillus subtilis (strain 168).